Consider the following 160-residue polypeptide: MTKTEKTQIIETLTAEFKASSAIAVCDYKGLTVRQFEALRRAARDNGAKVQVVKNTLAGIALENADAKGLELKETNVFVWSDDQIALSKTIMKFAETSNEKFKVKFGYYEGSVVDAAHIETVSKLPSRDELIGMLLSVWTAPARYFVTALDNLKKQKEEN.

It belongs to the universal ribosomal protein uL10 family. In terms of assembly, part of the ribosomal stalk of the 50S ribosomal subunit. The N-terminus interacts with L11 and the large rRNA to form the base of the stalk. The C-terminus forms an elongated spine to which L12 dimers bind in a sequential fashion forming a multimeric L10(L12)X complex.

In terms of biological role, forms part of the ribosomal stalk, playing a central role in the interaction of the ribosome with GTP-bound translation factors. The polypeptide is Large ribosomal subunit protein uL10 (Wolinella succinogenes (strain ATCC 29543 / DSM 1740 / CCUG 13145 / JCM 31913 / LMG 7466 / NCTC 11488 / FDC 602W) (Vibrio succinogenes)).